Consider the following 628-residue polypeptide: Chaperone protein DnaK (628 aa).

Thr-197 carries the phosphothreonine; by autocatalysis modification. Over residues 595 to 604 the composition is skewed to basic and acidic residues; that stretch reads AEAMYKKEQG. The disordered stretch occupies residues 595 to 628; sequence AEAMYKKEQGEQAGAQPNQKAKKDDDDVIDAEVE.

The protein belongs to the heat shock protein 70 family.

In terms of biological role, acts as a chaperone. This chain is Chaperone protein DnaK, found in Aliarcobacter butzleri (strain RM4018) (Arcobacter butzleri).